The following is a 220-amino-acid chain: Thiamine-phosphate synthase (220 aa).

4-amino-2-methyl-5-(diphosphooxymethyl)pyrimidine is bound by residues 46–50 (QFREK) and Asn83. Positions 84 and 103 each coordinate Mg(2+). Residue Ser122 coordinates 4-amino-2-methyl-5-(diphosphooxymethyl)pyrimidine. A 2-[(2R,5Z)-2-carboxy-4-methylthiazol-5(2H)-ylidene]ethyl phosphate-binding site is contributed by 149 to 151 (TNS). Residue Lys152 participates in 4-amino-2-methyl-5-(diphosphooxymethyl)pyrimidine binding. 2-[(2R,5Z)-2-carboxy-4-methylthiazol-5(2H)-ylidene]ethyl phosphate is bound by residues Gly181 and 201 to 202 (IS).

Belongs to the thiamine-phosphate synthase family. It depends on Mg(2+) as a cofactor.

It carries out the reaction 2-[(2R,5Z)-2-carboxy-4-methylthiazol-5(2H)-ylidene]ethyl phosphate + 4-amino-2-methyl-5-(diphosphooxymethyl)pyrimidine + 2 H(+) = thiamine phosphate + CO2 + diphosphate. The catalysed reaction is 2-(2-carboxy-4-methylthiazol-5-yl)ethyl phosphate + 4-amino-2-methyl-5-(diphosphooxymethyl)pyrimidine + 2 H(+) = thiamine phosphate + CO2 + diphosphate. It catalyses the reaction 4-methyl-5-(2-phosphooxyethyl)-thiazole + 4-amino-2-methyl-5-(diphosphooxymethyl)pyrimidine + H(+) = thiamine phosphate + diphosphate. It participates in cofactor biosynthesis; thiamine diphosphate biosynthesis; thiamine phosphate from 4-amino-2-methyl-5-diphosphomethylpyrimidine and 4-methyl-5-(2-phosphoethyl)-thiazole: step 1/1. Functionally, condenses 4-methyl-5-(beta-hydroxyethyl)thiazole monophosphate (THZ-P) and 2-methyl-4-amino-5-hydroxymethyl pyrimidine pyrophosphate (HMP-PP) to form thiamine monophosphate (TMP). This is Thiamine-phosphate synthase from Mannheimia succiniciproducens (strain KCTC 0769BP / MBEL55E).